We begin with the raw amino-acid sequence, 672 residues long: UvrABC system protein B (672 aa).

Residues 26–181 (AGLEDGLAYQ…ILQRLAELQY (156 aa)) form the Helicase ATP-binding domain. Residue 39 to 46 (GVTGSGKT) coordinates ATP. The Beta-hairpin signature appears at 92-115 (YYDYYQPEAYVPSSDTYIEKDASI). The region spanning 430 to 592 (QVDDLLSEIK…ITPKSIQKAV (163 aa)) is the Helicase C-terminal domain. The UVR domain occupies 631–666 (AKELRKLEEQMYHHARNLEFEEAAAVRDKIQHIRKG).

It belongs to the UvrB family. As to quaternary structure, forms a heterotetramer with UvrA during the search for lesions. Interacts with UvrC in an incision complex.

Its subcellular location is the cytoplasm. Functionally, the UvrABC repair system catalyzes the recognition and processing of DNA lesions. A damage recognition complex composed of 2 UvrA and 2 UvrB subunits scans DNA for abnormalities. Upon binding of the UvrA(2)B(2) complex to a putative damaged site, the DNA wraps around one UvrB monomer. DNA wrap is dependent on ATP binding by UvrB and probably causes local melting of the DNA helix, facilitating insertion of UvrB beta-hairpin between the DNA strands. Then UvrB probes one DNA strand for the presence of a lesion. If a lesion is found the UvrA subunits dissociate and the UvrB-DNA preincision complex is formed. This complex is subsequently bound by UvrC and the second UvrB is released. If no lesion is found, the DNA wraps around the other UvrB subunit that will check the other stand for damage. This Coxiella burnetii (strain CbuG_Q212) (Coxiella burnetii (strain Q212)) protein is UvrABC system protein B.